Consider the following 246-residue polypeptide: TLC domain-containing protein 2 (246 aa).

6 helical membrane passes run Ser5 to Gly25, Ile43 to Met63, Ser79 to Ile99, Trp107 to Cys127, Arg128 to Leu148, and Phe199 to Phe219. The TLC domain occupies Arg35–Ser231.

This sequence belongs to the TLCD family.

It is found in the cell membrane. Regulates the composition and fluidity of the plasma membrane. Inhibits the incorporation of membrane-fluidizing phospholipids containing omega-3 long-chain polyunsaturated fatty acids (LCPUFA) and thereby promotes membrane rigidity. Does not appear to have any effect on LCPUFA synthesis. The protein is TLC domain-containing protein 2 (tlcd2) of Danio rerio (Zebrafish).